Consider the following 408-residue polypeptide: Protein BTN1 (408 aa).

The first 30 residues, 1-30 (MSDKSHQIYCYFWLFGLINNVLYVVILSAA), serve as a signal peptide directing secretion. The next 7 helical transmembrane spans lie at 42–62 (LVLLADIFPSLAIKLCSPFFI), 80–100 (LGMFLVSFKNLFVCLLGISFA), 128–148 (SGTGGAGIIGGASYMFLTSIF), 150–170 (VPVKLTLLVFSLLPFAFLFYF), 238–258 (TVYLFEYLINQAVAPTLLFPI), 323–343 (WFYVTHSPWAVMILIFYEGFL), and 369–389 (GAVSIADSFGVFLAALLGLGL).

It belongs to the battenin family.

It localises to the vacuole membrane. Plays a role in vacuolar arginine transport. Involved in pH homeostasis. May be involved in ion homeostasis together with IST2. Not necessary for mitochondrial function or ATP synthase degradation. The protein is Protein BTN1 (YHC3) of Saccharomyces cerevisiae (strain ATCC 204508 / S288c) (Baker's yeast).